The following is a 146-amino-acid chain: Ribonuclease VapC41 (146 aa).

The PINc domain occupies 3–142 (LCDTNIWLAL…FTQYGGIELR (140 aa)). The Mg(2+) site is built by Asp5 and Asp112.

It belongs to the PINc/VapC protein family. Requires Mg(2+) as cofactor.

In terms of biological role, toxic component of a type II toxin-antitoxin (TA) system. An RNase. Its toxic effect is neutralized by coexpression with cognate antitoxin VapB41. This Mycobacterium tuberculosis (strain CDC 1551 / Oshkosh) protein is Ribonuclease VapC41.